A 102-amino-acid polypeptide reads, in one-letter code: Citrate lyase acyl carrier protein (102 aa).

Ser14 carries the O-(phosphoribosyl dephospho-coenzyme A)serine modification.

Belongs to the CitD family. In terms of assembly, oligomer with a subunit composition of (alpha,beta,gamma)6.

The protein localises to the cytoplasm. In terms of biological role, covalent carrier of the coenzyme of citrate lyase. The sequence is that of Citrate lyase acyl carrier protein from Streptococcus pyogenes serotype M18 (strain MGAS8232).